We begin with the raw amino-acid sequence, 342 residues long: S-adenosylmethionine:tRNA ribosyltransferase-isomerase (342 aa).

It belongs to the QueA family. As to quaternary structure, monomer.

The protein localises to the cytoplasm. It catalyses the reaction 7-aminomethyl-7-carbaguanosine(34) in tRNA + S-adenosyl-L-methionine = epoxyqueuosine(34) in tRNA + adenine + L-methionine + 2 H(+). Its pathway is tRNA modification; tRNA-queuosine biosynthesis. Its function is as follows. Transfers and isomerizes the ribose moiety from AdoMet to the 7-aminomethyl group of 7-deazaguanine (preQ1-tRNA) to give epoxyqueuosine (oQ-tRNA). This is S-adenosylmethionine:tRNA ribosyltransferase-isomerase from Streptococcus pyogenes serotype M1.